Reading from the N-terminus, the 165-residue chain is Shikimate kinase (165 aa).

12–17 (GCGKST) contacts ATP. A Mg(2+)-binding site is contributed by Ser-16. Substrate contacts are provided by Asp-34, Arg-57, and Gly-79. Arg-116 is a binding site for ATP. Arg-133 is a binding site for substrate.

The protein belongs to the shikimate kinase family. Monomer. Mg(2+) serves as cofactor.

Its subcellular location is the cytoplasm. It catalyses the reaction shikimate + ATP = 3-phosphoshikimate + ADP + H(+). It functions in the pathway metabolic intermediate biosynthesis; chorismate biosynthesis; chorismate from D-erythrose 4-phosphate and phosphoenolpyruvate: step 5/7. Functionally, catalyzes the specific phosphorylation of the 3-hydroxyl group of shikimic acid using ATP as a cosubstrate. This Clostridium botulinum (strain Eklund 17B / Type B) protein is Shikimate kinase.